The chain runs to 197 residues: uncharacterized protein (197 aa).

A run of 6 helical transmembrane segments spans residues 5–23 (LNLL…GLRF), 27–46 (ISFA…MLRF), 55–77 (VIAG…LAYT), 87–109 (LSLL…VIRI), 116–138 (VFAF…LPTG), and 153–174 (FVEF…CLVF).

The protein localises to the cell membrane. This is an uncharacterized protein from Archaeoglobus fulgidus (strain ATCC 49558 / DSM 4304 / JCM 9628 / NBRC 100126 / VC-16).